A 330-amino-acid chain; its full sequence is MWLLVSVILISRISSVGGEATFCDFPKINHGILYDEEKYKPFSQVPTGEVFYYSCEYNFVSPSKSFWTRITCTEEGWSPTPKCLRLCFFPFVENGHSESSGQTHLEGDTVQIICNTGYRLQNNENNISCVERGWSTPPKCRSTDTSCVNPPTVQNAHILSRQMSKYPSGERVRYECRSPYEMFGDEEVMCLNGNWTEPPQCKDSTGKCGPPPPIDNGDITSFPLSVYAPASSVEYQCQNLYQLEGNKRITCRNGQWSEPPKCLHPCVISREIMENYNIALRWTAKQKLYLRTGESAEFVCKRGYRLSSRSHTLRTTCWDGKLEYPTCAKR.

The first 18 residues, 1–18 (MWLLVSVILISRISSVGG), serve as a signal peptide directing secretion. Sushi domains follow at residues 22–84 (FCDF…PKCL), 85–142 (RLCF…KCRS), 145–203 (TSCV…QCKD), 206–264 (GKCG…KCLH), and 273–329 (MENY…TCAK). Intrachain disulfides connect Cys-23–Cys-72, Cys-55–Cys-83, Cys-87–Cys-129, Cys-114–Cys-140, Cys-147–Cys-190, Cys-176–Cys-201, Cys-208–Cys-251, Cys-237–Cys-262, Cys-266–Cys-317, and Cys-300–Cys-327. Asn-126 carries an N-linked (GlcNAc...) asparagine glycan. Residue Asn-194 is glycosylated (N-linked (GlcNAc...) asparagine).

Head-to-tail homodimer and heterodimer with CFHR2 or CFHR5. As to quaternary structure, (Microbial infection) Interacts with C.albicans GPD2; the interaction is direct and leads to the degradation of C3. Post-translationally, N-glycosylated. Two forms are observed; one with a single side chain and the other with two. As to expression, expressed by the liver and secreted in plasma.

It localises to the secreted. Its function is as follows. Involved in complement regulation. The dimerized forms have avidity for tissue-bound complement fragments and efficiently compete with the physiological complement inhibitor CFH. Can associate with lipoproteins and may play a role in lipid metabolism. This Homo sapiens (Human) protein is Complement factor H-related protein 1 (CFHR1).